The following is a 425-amino-acid chain: Pre-mRNA-splicing factor RBM22 (425 aa).

Residues 159–186 (RNRPHICSFWVKGECKRGEECPYRHEKP) form a C3H1-type zinc finger. The region spanning 232–305 (TTLYIGGLGE…RRLNVKWGRS (74 aa)) is the RRM domain. 2 disordered regions span residues 304 to 331 (RSQA…PGLP) and 384 to 425 (HTMD…HGGP). Positions 389–399 (MAPPVPPPMAL) are enriched in pro residues.

It belongs to the SLT11 family. As to quaternary structure, component of the pre-catalytic and catalytic spliceosome complexes. Component of the postcatalytic spliceosome P complex.

The protein localises to the nucleus. It is found in the cytoplasm. Required for pre-mRNA splicing as component of the activated spliceosome. Involved in the first step of pre-mRNA splicing. Binds directly to the internal stem-loop (ISL) domain of the U6 snRNA and to the pre-mRNA intron near the 5' splice site during the activation and catalytic phases of the spliceosome cycle. Required for normal early embryogenesis. This chain is Pre-mRNA-splicing factor RBM22 (rbm22), found in Danio rerio (Zebrafish).